A 310-amino-acid polypeptide reads, in one-letter code: Probable manganese-dependent inorganic pyrophosphatase (310 aa).

Positions 9, 13, 15, 76, 98, and 150 each coordinate Mn(2+).

Belongs to the PPase class C family. The cofactor is Mn(2+).

Its subcellular location is the cytoplasm. The enzyme catalyses diphosphate + H2O = 2 phosphate + H(+). The protein is Probable manganese-dependent inorganic pyrophosphatase of Streptococcus thermophilus (strain ATCC BAA-491 / LMD-9).